The primary structure comprises 373 residues: GTP cyclohydrolase 1 type 2 homolog (373 aa).

Residues histidine 67, histidine 68, aspartate 106, histidine 333, and glutamate 336 each contribute to the a divalent metal cation site.

This sequence belongs to the GTP cyclohydrolase I type 2/NIF3 family. In terms of assembly, homohexamer.

This chain is GTP cyclohydrolase 1 type 2 homolog, found in Listeria monocytogenes serovar 1/2a (strain ATCC BAA-679 / EGD-e).